The sequence spans 1101 residues: Carbamoyl phosphate synthase large chain (1101 aa).

Residues 1-402 (MPKRTDLKSV…ALQKALRSLE (402 aa)) are carboxyphosphate synthetic domain. Residues Arg129, Arg169, Gly175, Gly176, Glu208, Ile210, Glu215, Gly241, Val242, His243, Gln285, and Glu299 each coordinate ATP. An ATP-grasp 1 domain is found at 133 to 328 (KGVVERAGGE…IAKIATKLAL (196 aa)). Positions 285, 299, and 301 each coordinate Mg(2+). Residues Gln285, Glu299, and Asn301 each contribute to the Mn(2+) site. An oligomerization domain region spans residues 403-544 (QKGSELAFPQ…YRYSSYDLET (142 aa)). Residues 545-947 (EVAPHEGESV…AFAKSQSAAG (403 aa)) form a carbamoyl phosphate synthetic domain region. An ATP-grasp 2 domain is found at 675 to 866 (ALVLERAGLV…LAKAAARIGV (192 aa)). ATP-binding residues include Arg711, Arg750, Leu752, Glu757, Gly782, Ile783, His784, Ser785, Gln825, and Glu837. Residues Gln825, Glu837, and Asn839 each coordinate Mg(2+). Mn(2+) is bound by residues Gln825, Glu837, and Asn839. Residues 948 to 1093 (GPLPTSGRVF…QEHDARLQQA (146 aa)) form the MGS-like domain. The tract at residues 948 to 1101 (GPLPTSGRVF…QAVAGPEAAA (154 aa)) is allosteric domain.

The protein belongs to the CarB family. In terms of assembly, composed of two chains; the small (or glutamine) chain promotes the hydrolysis of glutamine to ammonia, which is used by the large (or ammonia) chain to synthesize carbamoyl phosphate. Tetramer of heterodimers (alpha,beta)4. It depends on Mg(2+) as a cofactor. Mn(2+) serves as cofactor.

It catalyses the reaction hydrogencarbonate + L-glutamine + 2 ATP + H2O = carbamoyl phosphate + L-glutamate + 2 ADP + phosphate + 2 H(+). The catalysed reaction is hydrogencarbonate + NH4(+) + 2 ATP = carbamoyl phosphate + 2 ADP + phosphate + 2 H(+). It functions in the pathway amino-acid biosynthesis; L-arginine biosynthesis; carbamoyl phosphate from bicarbonate: step 1/1. Its pathway is pyrimidine metabolism; UMP biosynthesis via de novo pathway; (S)-dihydroorotate from bicarbonate: step 1/3. Large subunit of the glutamine-dependent carbamoyl phosphate synthetase (CPSase). CPSase catalyzes the formation of carbamoyl phosphate from the ammonia moiety of glutamine, carbonate, and phosphate donated by ATP, constituting the first step of 2 biosynthetic pathways, one leading to arginine and/or urea and the other to pyrimidine nucleotides. The large subunit (synthetase) binds the substrates ammonia (free or transferred from glutamine from the small subunit), hydrogencarbonate and ATP and carries out an ATP-coupled ligase reaction, activating hydrogencarbonate by forming carboxy phosphate which reacts with ammonia to form carbamoyl phosphate. The chain is Carbamoyl phosphate synthase large chain from Micrococcus luteus (strain ATCC 4698 / DSM 20030 / JCM 1464 / CCM 169 / CCUG 5858 / IAM 1056 / NBRC 3333 / NCIMB 9278 / NCTC 2665 / VKM Ac-2230) (Micrococcus lysodeikticus).